The following is a 526-amino-acid chain: Arp2/3 complex-activating protein rickA (526 aa).

The interval 305–356 (TTSSIAKPLENNVTPPPPLTKNNIPPPPPPPPLSKNNILPPPPPPMPTMAPA) is disordered. Residues 318–352 (TPPPPLTKNNIPPPPPPPPLSKNNILPPPPPPMPT) are compositionally biased toward pro residues. 2 consecutive WH2 domains span residues 383 to 400 (DTSD…LRKV) and 410 to 427 (SRDL…LRKV). Disordered regions lie at residues 425–452 (RKVE…SKPN) and 464–526 (MEMS…FVRS). The segment at 448-484 (VSKPNGVASILARRVAMEMSDSSSSSGSESDSGNWSD) is central and acidic domains. Residues 464–480 (MEMSDSSSSSGSESDSG) show a composition bias toward low complexity. 2 stretches are compositionally biased toward polar residues: residues 481 to 491 (NWSDASVNSNK) and 506 to 526 (TTHA…FVRS).

Homodimer.

It localises to the cell surface. Recruits and activates the Arp2/3 complex, which in turn leads to actin polymerization, promoting Rickettsia motility during infection. The sequence is that of Arp2/3 complex-activating protein rickA (rickA) from Rickettsia felis (strain ATCC VR-1525 / URRWXCal2) (Rickettsia azadi).